Here is a 484-residue protein sequence, read N- to C-terminus: Protein arginine methyltransferase NDUFAF7 homolog, mitochondrial (484 aa).

A mitochondrion-targeting transit peptide spans 1–12; that stretch reads MFRSITQRVIRN.

This sequence belongs to the NDUFAF7 family. As to quaternary structure, homodimer. Interacts with ndufs2.

It is found in the mitochondrion. It carries out the reaction L-arginyl-[protein] + 2 S-adenosyl-L-methionine = N(omega),N(omega)'-dimethyl-L-arginyl-[protein] + 2 S-adenosyl-L-homocysteine + 2 H(+). Its function is as follows. Involved in the assembly or stability of mitochondrial NADH:ubiquinone oxidoreductase complex (complex I). Acts as an arginine methyltransferase and probably acts by mediating arginine methylation of ndufs2. This is Protein arginine methyltransferase NDUFAF7 homolog, mitochondrial from Dictyostelium discoideum (Social amoeba).